Reading from the N-terminus, the 293-residue chain is Small ribosomal subunit biogenesis GTPase RsgA (293 aa).

Residues 63–223 form the CP-type G domain; that stretch reads KNELVRPPIA…VADTPGFSSL (161 aa). GTP is bound by residues 112 to 115 and 166 to 174; these read SKMD and GQSGVGKSS. Residues Cys-247, Cys-252, His-254, and Cys-260 each coordinate Zn(2+).

This sequence belongs to the TRAFAC class YlqF/YawG GTPase family. RsgA subfamily. In terms of assembly, monomer. Associates with 30S ribosomal subunit, binds 16S rRNA. Zn(2+) is required as a cofactor.

Its subcellular location is the cytoplasm. In terms of biological role, one of several proteins that assist in the late maturation steps of the functional core of the 30S ribosomal subunit. Helps release RbfA from mature subunits. May play a role in the assembly of ribosomal proteins into the subunit. Circularly permuted GTPase that catalyzes slow GTP hydrolysis, GTPase activity is stimulated by the 30S ribosomal subunit. The polypeptide is Small ribosomal subunit biogenesis GTPase RsgA (Bacillus cereus (strain ATCC 10987 / NRS 248)).